A 246-amino-acid polypeptide reads, in one-letter code: Phosphatidylserine decarboxylase proenzyme (246 aa).

The Schiff-base intermediate with substrate; via pyruvic acid role is filled by Ser204. Ser204 bears the Pyruvic acid (Ser); by autocatalysis mark.

It belongs to the phosphatidylserine decarboxylase family. PSD-A subfamily. As to quaternary structure, heterodimer of a large membrane-associated beta subunit and a small pyruvoyl-containing alpha subunit. It depends on pyruvate as a cofactor. Is synthesized initially as an inactive proenzyme. Formation of the active enzyme involves a self-maturation process in which the active site pyruvoyl group is generated from an internal serine residue via an autocatalytic post-translational modification. Two non-identical subunits are generated from the proenzyme in this reaction, and the pyruvate is formed at the N-terminus of the alpha chain, which is derived from the carboxyl end of the proenzyme. The post-translation cleavage follows an unusual pathway, termed non-hydrolytic serinolysis, in which the side chain hydroxyl group of the serine supplies its oxygen atom to form the C-terminus of the beta chain, while the remainder of the serine residue undergoes an oxidative deamination to produce ammonia and the pyruvoyl prosthetic group on the alpha chain.

It is found in the cell membrane. The enzyme catalyses a 1,2-diacyl-sn-glycero-3-phospho-L-serine + H(+) = a 1,2-diacyl-sn-glycero-3-phosphoethanolamine + CO2. It functions in the pathway phospholipid metabolism; phosphatidylethanolamine biosynthesis; phosphatidylethanolamine from CDP-diacylglycerol: step 2/2. Its function is as follows. Catalyzes the formation of phosphatidylethanolamine (PtdEtn) from phosphatidylserine (PtdSer). This is Phosphatidylserine decarboxylase proenzyme from Zymomonas mobilis subsp. mobilis (strain ATCC 31821 / ZM4 / CP4).